The chain runs to 882 residues: Homeobox-leucine zipper protein ROC3 (882 aa).

Positions 104–144 (DVDDDHKPQHSGHDQPPDAAQPSGAAGGNAKKKRYHRHTAH) are disordered. Residues 107–119 (DDHKPQHSGHDQP) are compositionally biased toward basic and acidic residues. Positions 133-143 (AKKKRYHRHTA) are enriched in basic residues. The homeobox DNA-binding region spans 134 to 193 (KKKRYHRHTAHQIQQMEALFKECPHPDDKQRLKLSQELGLKPRQVKFWFQNRRTQMKAQQ). The stretch at 200-263 (ILRAENENLK…LDRLACIATR (64 aa)) forms a coiled coil. The START domain maps to 340–584 (QEQDKQLVVD…LQRQCERLAS (245 aa)). Positions 782-816 (AAAPTISSSTTTTTGNGNGETSSTPPRNSSSNNNN) are enriched in low complexity. Residues 782–820 (AAAPTISSSTTTTTGNGNGETSSTPPRNSSSNNNNADEL) are disordered.

Belongs to the HD-ZIP homeobox family. Class IV subfamily.

It is found in the nucleus. Its function is as follows. Probable transcription factor. The polypeptide is Homeobox-leucine zipper protein ROC3 (ROC3) (Oryza sativa subsp. japonica (Rice)).